Here is a 314-residue protein sequence, read N- to C-terminus: DNA-directed RNA polymerase subunit alpha (314 aa).

Residues 1–228 (MIEIEKPKIE…EHLNIFVGLT (228 aa)) form an alpha N-terminal domain (alpha-NTD) region. An alpha C-terminal domain (alpha-CTD) region spans residues 246–314 (EKVLEMTIEE…ELGLGLRKDD (69 aa)).

The protein belongs to the RNA polymerase alpha chain family. As to quaternary structure, homodimer. The RNAP catalytic core consists of 2 alpha, 1 beta, 1 beta' and 1 omega subunit. When a sigma factor is associated with the core the holoenzyme is formed, which can initiate transcription.

It catalyses the reaction RNA(n) + a ribonucleoside 5'-triphosphate = RNA(n+1) + diphosphate. DNA-dependent RNA polymerase catalyzes the transcription of DNA into RNA using the four ribonucleoside triphosphates as substrates. The protein is DNA-directed RNA polymerase subunit alpha of Bacillus pumilus (strain SAFR-032).